The primary structure comprises 1073 residues: MRPFHAYSWIFSQQYMGTKNVKEKNPTIYSFDDEEKRNENKSFLKVLCSKRGVLPIIGILYIILNGNLGYNGSSSSGVQFTDRCSRNLYGETLPVNPYADSENPIVVSQVFGLPFEKPTFTLESPPDIDHTNILGFNEKFMTDVNRYRYSNNYEAIPHISEFNPLIVDKVLFDYNEKVDNLGRSGGDIIKKMQTLWDEIMDINKRKYDSLKEKLQKTYSQYKVQYDMPKEAYESKWTQCIKLIDQGGENLEERLNSQFKNWYRQKYLNLEEYRRLTVLNQIAWKALSNQIQYSCRKIMNSDISSFKHINELKSLEHRAAKAAEAEMKKRAQKPKKKKSRRGWLCCGGGDIETVEPQQEEPVQTVQEQQVNEYGDILPSLRASITNSAINYYDTVKDGVYLDHETSDALYTDEDLLFDLEKQKYMDMLDTSEEESVEENEEEHTVDDEHVEEHTADDEHVEEPTVADDEHVEEPTVADEHVEEPTVAEEHVEEPTVAEEHVEEPASDVQQTSEAAPTIEIPDTLYYDILGVGVNADMNEITERYFKLAENYYPYQRSGSTVFHNFRKVNEAYQVLGDIDKKRWYNKYGYDGIKQVNFMNPSIFYLLSSLEKFKDFTGTPQIVTLLRFFFEKRLSMNDLENKSEHLLKFMEQYQKEREAHVSEYLLNILQPCIAGDSKWNVPIITKLEGLKGSRFDIPILESLRWIFKHVAKTHLKKSSKSAKKLQQRTQANKQELANINNNLMSTLKEYLGSSEQMNSITYNFENINSNVDNGNQSKNISDLSYTDQKEILEKIVSYIVDISLYDIENTALNAAEQLLSDNSVDEKTLKKRAQSLKKLSSIMERYAGGKRNDKKSKNFDTKDIVGYIMHGISTINTEMKNQNENVPEHVQHNAEENVEHDAEENVEHDAEENVEHDAEENVEHDAEENVEHDAEENVEENVEEVEENVEENVEENVEENVEEVEENVEENVEENVEENVEENVEENVEENVEENVEENVEEYDEENVEEVEENVEENVEENVEENVEENVEEVEENVEENVEENVEENVEENVEENVEEYDEENVEEHNEEYDE.

The N-terminal stretch at 1 to 65 (MRPFHAYSWI…IIGILYIILN (65 aa)) is a signal peptide. N-linked (GlcNAc...) asparagine glycosylation occurs at Asn-71. A compositionally biased stretch (acidic residues) spans 428–444 (DTSEEESVEENEEEHTV). Positions 428–514 (DTSEEESVEE…SDVQQTSEAA (87 aa)) are disordered. The interval 436–504 (EENEEEHTVD…VAEEHVEEPA (69 aa)) is tandem repeats 1. The span at 445–456 (DDEHVEEHTADD) shows a compositional bias: basic and acidic residues. A compositionally biased stretch (acidic residues) spans 457–470 (EHVEEPTVADDEHV). Residues 476–502 (ADEHVEEPTVAEEHVEEPTVAEEHVEE) show a composition bias toward basic and acidic residues. A J domain is found at 521 to 589 (DTLYYDILGV…KRWYNKYGYD (69 aa)). N-linked (GlcNAc...) asparagine glycosylation is found at Asn-639, Asn-773, and Asn-777. The segment at 891-1073 (NAEENVEHDA…VEEHNEEYDE (183 aa)) is tandem repeats 2. The segment covering 894 to 930 (ENVEHDAEENVEHDAEENVEHDAEENVEHDAEENVEH) has biased composition (basic and acidic residues). The interval 894–1073 (ENVEHDAEEN…VEEHNEEYDE (180 aa)) is disordered. Residues 931-1073 (DAEENVEENV…VEEHNEEYDE (143 aa)) are compositionally biased toward acidic residues.

In terms of processing, the Tyr residues in the variant tetrameric sequences in the RESA repeat are possibly phosphorylated (by homology with band 3).

It is found in the cell membrane. May disrupt the normal intermolecular interactions of the cytoplasmic domain of band 3 and thereby facilitate the invagination of the red cell membrane which is necessary for the formation of the parasitophorous vacuole. The chain is Ring-infected erythrocyte surface antigen (RESA) from Plasmodium falciparum (isolate FC27 / Papua New Guinea).